A 747-amino-acid polypeptide reads, in one-letter code: E3 UFM1-protein ligase 1 homolog (747 aa).

Positions 403-468 are disordered; it reads EKKKQCGSKA…GTVQVNSEEL (66 aa). Residues 429–438 are compositionally biased toward basic residues; the sequence is GGKGGKKGGK. Gly residues predominate over residues 439–449; it reads GGKNGGGGGKG. The segment covering 450–465 has biased composition (polar residues); the sequence is ATSSVPTGSGTVQVNS.

Belongs to the UFL1 family.

In terms of biological role, E3 UFM1-protein ligase that mediates ufmylation of target proteins. This chain is E3 UFM1-protein ligase 1 homolog (ufl-1), found in Caenorhabditis briggsae.